Consider the following 151-residue polypeptide: Putative phosphatidylglycerol/phosphatidylinositol transfer protein 1 (151 aa).

Residues 1–26 form the signal peptide; the sequence is MKHSKNQIVYITFFIIILIVVKPIES.

It belongs to the NPC2 family. As to quaternary structure, monomer.

Functionally, catalyzes the intermembrane transfer of phosphatidylglycerol and phosphatidylinositol. In Dictyostelium discoideum (Social amoeba), this protein is Putative phosphatidylglycerol/phosphatidylinositol transfer protein 1.